The sequence spans 157 residues: MSIIPSFFGGRRSNVFDPFSLDVWDPFKDFPLVTSSASEFGKETAAFVNTHIDWKETPQAHVFKADLPGLKKEEVKVELEEGKVLQISGERNKEKEEKNDKWHRVERSSGKFLRRFRLPENAKVDEVKAAMANGVVTVTVPKVEIKKPEVKAIDISG.

Positions 43 to 157 (ETAAFVNTHI…PEVKAIDISG (115 aa)) constitute a sHSP domain.

The protein belongs to the small heat shock protein (HSP20) family. As to quaternary structure, forms oligomeric structures.

The protein localises to the cytoplasm. This chain is 17.8 kDa class I heat shock protein, found in Daucus carota (Wild carrot).